Here is a 1486-residue protein sequence, read N- to C-terminus: Glutamate synthase [NADPH] large chain (1486 aa).

A propeptide spanning residues M1–N11 is cleaved from the precursor. Catalysis depends on C12, which acts as the Nucleophile. One can recognise a Glutamine amidotransferase type-2 domain in the interval C12–R402. L1049–G1101 is an FMN binding site. The [3Fe-4S] cluster site is built by C1102, C1108, and C1113.

Belongs to the glutamate synthase family. Aggregate of 4 catalytic active heterodimers, consisting of a large and a small subunit. It depends on [3Fe-4S] cluster as a cofactor. FAD serves as cofactor. The cofactor is FMN.

It carries out the reaction 2 L-glutamate + NADP(+) = L-glutamine + 2-oxoglutarate + NADPH + H(+). It functions in the pathway amino-acid biosynthesis; L-glutamate biosynthesis via GLT pathway; L-glutamate from 2-oxoglutarate and L-glutamine (NADP(+) route): step 1/1. The protein operates within energy metabolism; nitrogen metabolism. Catalyzes the conversion of L-glutamine and 2-oxoglutarate into two molecules of L-glutamate. This is Glutamate synthase [NADPH] large chain (gltB) from Escherichia coli (strain K12).